We begin with the raw amino-acid sequence, 1189 residues long: Phosphinothricin tripeptide synthetase PhsB (1189 aa).

In terms of domain architecture, Carrier 1 spans Gln-5–Arg-80. Position 40 is an O-(pantetheine 4'-phosphoryl)serine (Ser-40). Disordered regions lie at residues Arg-75–Ser-97 and Thr-454–Thr-476. The interval Thr-100–Ala-541 is condensation. Over residues Pro-455–Ser-472 the composition is skewed to basic and acidic residues. The segment at Ala-572–Arg-969 is adenylation. Positions Asp-1045–Ala-1081 are disordered. The region spanning Ala-1076–Gln-1151 is the Carrier 2 domain. Ser-1111 carries the O-(pantetheine 4'-phosphoryl)serine modification.

The protein belongs to the NRP synthetase family. The cofactor is pantetheine 4'-phosphate.

It catalyses the reaction holo-[peptidyl-carrier protein] + L-alanine + ATP = L-alanyl-[peptidyl-carrier protein] + AMP + diphosphate. It participates in secondary metabolite biosynthesis; bialaphos biosynthesis. In terms of biological role, involved in the biosynthesis of phosphinothricin tripeptide (PTT), also known as bialaphos (BA), a natural-product antibiotic and potent herbicide. Adenylates L-alanine and loads it onto a peptidyl carrier domain via a thioester linkage to the phosphopanthetheine moiety. Shows weaker activity with aminobutyric acid and L-serine. The sequence is that of Phosphinothricin tripeptide synthetase PhsB from Streptomyces viridochromogenes (strain DSM 40736 / JCM 4977 / BCRC 1201 / Tue 494).